The following is a 550-amino-acid chain: MSAQTLAISNLKPNTTRHLASFHPNIWGDRFLSCAAESTDIEDDMEQQVERLKEEVKKMIASADEPSQILNLIDLLQRLGVSYHFEKEIEEALQQVLNMNSDSDKDDDLHSVALRFRLLREQGLNVSCDVFNKFRDRNGHFIQTLKTDLQGMLSLYEAAHFRVHGEGILDDALAFTTTYLESIVPNLSPPLAAQISRTLRQPLRKSLARVEARHFISIYQEDTSHNEVLLTFAKLDFNLLQKLHQKELKYISLWWKDLDFVNKLPFTRDRVVEGYFWILGVYFEPQYHRARKFVTKVINVVSVIDDIYDAYGTLEELVVFTDAINRWDIDCIDQLPEYMKVCYKALLNVYEEIERALSEQGRSYRLHYAKEAMKKLVQAYLVEANWMNKNYVPTMDEYMSIALVSCAYPLLTVTSFVGMGDIATKEVFDWASNDPKIVRVASIICRLMDDIVSHEFEQKRGHIASSVECYMKQNGVSEEATRDEFNKQIVDAWKDINEEHLQPNYVPMPFRTRVVNSARIMDYLYKDDDEYTHVGELMKGSVAALLIDPA.

3 residues coordinate Mg(2+): D305, D309, and E457. A DDXXD motif motif is present at residues 305-309; that stretch reads DDIYD.

This sequence belongs to the terpene synthase family. Mg(2+) serves as cofactor.

Functionally, probable sesquiterpene synthase. The chain is Probable terpene synthase 2 (TPS2) from Ricinus communis (Castor bean).